The sequence spans 234 residues: PHD finger protein ING1 (234 aa).

The segment at N129–N166 is disordered. Residues L149–S165 are compositionally biased toward low complexity. The PHD-type zinc finger occupies P178 to V227. Residues C181, C183, C194, C199, H205, C208, C221, and C224 each coordinate Zn(2+).

It belongs to the ING family. In terms of assembly, interacts with H3K4me3 and to a lesser extent with H3K4me2. In terms of tissue distribution, ubiquitously expressed.

It is found in the nucleus. Histone-binding component that specifically recognizes H3 tails trimethylated on 'Lys-4' (H3K4me3), which mark transcription start sites of virtually all active genes. The protein is PHD finger protein ING1 (ING1) of Arabidopsis thaliana (Mouse-ear cress).